The primary structure comprises 270 residues: GTP cyclohydrolase FolE2 2 (270 aa).

Belongs to the GTP cyclohydrolase IV family.

It catalyses the reaction GTP + H2O = 7,8-dihydroneopterin 3'-triphosphate + formate + H(+). It functions in the pathway cofactor biosynthesis; 7,8-dihydroneopterin triphosphate biosynthesis; 7,8-dihydroneopterin triphosphate from GTP: step 1/1. In terms of biological role, converts GTP to 7,8-dihydroneopterin triphosphate. This chain is GTP cyclohydrolase FolE2 2, found in Dechloromonas aromatica (strain RCB).